The following is a 304-amino-acid chain: Taste receptor type 2 member 4 (304 aa).

Residues 1–10 (MLWELYAFVF) lie on the Extracellular side of the membrane. The helical transmembrane segment at 11–31 (AASVVFNFVGIVANLFIIVII) threads the bilayer. Residues 32-46 (SKTWVKSHKISSSDK) lie on the Cytoplasmic side of the membrane. The chain crosses the membrane as a helical span at residues 47–67 (ILFSLAITRFLTLGLFLLNTV). Residues 68–80 (YIATNTGRSVYFS) lie on the Extracellular side of the membrane. The chain crosses the membrane as a helical span at residues 81 to 101 (TFFLLCWKFLDSNSLWLVTFL). Topologically, residues 102 to 128 (NCLYCVKITHFQHPVFLLLKRTVSMKT) are cytoplasmic. Residues 129–149 (TSLLLACLLISAFTTLLYFVL) form a helical membrane-spanning segment. Residues 150–171 (TQISRFPEHIIGRNDTLFDVSD) lie on the Extracellular side of the membrane. Asn163 carries an N-linked (GlcNAc...) asparagine glycan. Residues 172-192 (GILTLAASLILSSLLQFLLNV) form a helical membrane-spanning segment. Over 193–229 (TFASLLIHSLRRHVQKMQRNRSSFWNPQTEAHVGAMR) the chain is Cytoplasmic. A helical transmembrane segment spans residues 230–250 (LMICFLVLYIPYSIAALLYFP). Residues 251-260 (SYMRKNLRAQ) are Extracellular-facing. A helical transmembrane segment spans residues 261–281 (AACMIITAAYPPGHSILLIIT). Over 282-304 (HHKLKAKAKKICCFYKLRDFVSN) the chain is Cytoplasmic.

This sequence belongs to the G-protein coupled receptor T2R family. As to expression, expressed in tongue, stomach and duodenum.

Its subcellular location is the membrane. It is found in the cell projection. It localises to the cilium membrane. In terms of biological role, gustducin-coupled receptor implicated in the perception of bitter compounds in the oral cavity and the gastrointestinal tract. Signals through PLCB2 and the calcium-regulated cation channel TRPM5. In airway epithelial cells, binding of denatonium increases the intracellular calcium ion concentration and stimulates ciliary beat frequency. The polypeptide is Taste receptor type 2 member 4 (Rattus norvegicus (Rat)).